A 130-amino-acid polypeptide reads, in one-letter code: Large ribosomal subunit protein bL21 (130 aa).

The interval 103–130 (AGGKTSKAEPRKTRKAEPAAESAPAAAE) is disordered. Basic and acidic residues predominate over residues 108–120 (SKAEPRKTRKAEP). Low complexity predominate over residues 121-130 (AAESAPAAAE).

The protein belongs to the bacterial ribosomal protein bL21 family. As to quaternary structure, part of the 50S ribosomal subunit. Contacts protein L20.

This protein binds to 23S rRNA in the presence of protein L20. In Methylorubrum extorquens (strain CM4 / NCIMB 13688) (Methylobacterium extorquens), this protein is Large ribosomal subunit protein bL21.